A 1403-amino-acid polypeptide reads, in one-letter code: Baculoviral IAP repeat-containing protein 1 (1403 aa).

BIR repeat units lie at residues 60-127 (EAKR…CGFL), 159-227 (EEAR…CEFL), and 278-345 (EELR…CPFL). Residues cysteine 315, cysteine 318, histidine 335, and cysteine 342 each contribute to the Zn(2+) site. The NACHT domain maps to 464–758 (SVMCVEGEAG…EFLAGMRLIE (295 aa)). 473-478 (GSGKTV) lines the ATP pocket.

In terms of assembly, interacts (via NACHT domain) with APAF1 (via CARD and NACHT domains). Interacts with C.violaceum needle protein CprI. As to expression, expressed in motor neurons, but not in sensory neurons. Found in liver and placenta, and to a lesser extent in spinal cord.

In terms of biological role, anti-apoptotic protein which acts by inhibiting the activities of CASP3, CASP7 and CASP9. Can inhibit the autocleavage of pro-CASP9 and cleavage of pro-CASP3 by CASP9. Capable of inhibiting CASP9 autoproteolysis at 'Asp-315' and decreasing the rate of auto proteolysis at 'Asp-330'. Acts as a mediator of neuronal survival in pathological conditions. Prevents motor-neuron apoptosis induced by a variety of signals. Possible role in the prevention of spinal muscular atrophy that seems to be caused by inappropriate persistence of motor-neuron apoptosis: mutated or deleted forms of NAIP have been found in individuals with severe spinal muscular atrophy. Its function is as follows. Acts as a sensor component of the NLRC4 inflammasome that specifically recognizes and binds needle protein CprI from pathogenic bacteria C.violaceum. Association of pathogenic bacteria proteins drives in turn drive assembly and activation of the NLRC4 inflammasome, promoting caspase-1 activation, cytokine production and macrophage pyroptosis. The NLRC4 inflammasome is activated as part of the innate immune response to a range of intracellular bacteria such as C.violaceum and L.pneumophila. This is Baculoviral IAP repeat-containing protein 1 (NAIP) from Homo sapiens (Human).